The sequence spans 103 residues: Small ribosomal subunit protein uS10 (103 aa).

It belongs to the universal ribosomal protein uS10 family. As to quaternary structure, part of the 30S ribosomal subunit.

Its function is as follows. Involved in the binding of tRNA to the ribosomes. This chain is Small ribosomal subunit protein uS10, found in Vibrio cholerae serotype O1 (strain ATCC 39541 / Classical Ogawa 395 / O395).